The sequence spans 612 residues: Dihydroxy-acid dehydratase (612 aa).

Aspartate 81 provides a ligand contact to Mg(2+). Cysteine 122 lines the [2Fe-2S] cluster pocket. 2 residues coordinate Mg(2+): aspartate 123 and lysine 124. Lysine 124 is subject to N6-carboxylysine. A [2Fe-2S] cluster-binding site is contributed by cysteine 195. Glutamate 491 provides a ligand contact to Mg(2+). Residue serine 517 is the Proton acceptor of the active site.

Belongs to the IlvD/Edd family. Homodimer. Requires [2Fe-2S] cluster as cofactor. The cofactor is Mg(2+).

It catalyses the reaction (2R)-2,3-dihydroxy-3-methylbutanoate = 3-methyl-2-oxobutanoate + H2O. The catalysed reaction is (2R,3R)-2,3-dihydroxy-3-methylpentanoate = (S)-3-methyl-2-oxopentanoate + H2O. It functions in the pathway amino-acid biosynthesis; L-isoleucine biosynthesis; L-isoleucine from 2-oxobutanoate: step 3/4. Its pathway is amino-acid biosynthesis; L-valine biosynthesis; L-valine from pyruvate: step 3/4. Functions in the biosynthesis of branched-chain amino acids. Catalyzes the dehydration of (2R,3R)-2,3-dihydroxy-3-methylpentanoate (2,3-dihydroxy-3-methylvalerate) into 2-oxo-3-methylpentanoate (2-oxo-3-methylvalerate) and of (2R)-2,3-dihydroxy-3-methylbutanoate (2,3-dihydroxyisovalerate) into 2-oxo-3-methylbutanoate (2-oxoisovalerate), the penultimate precursor to L-isoleucine and L-valine, respectively. The protein is Dihydroxy-acid dehydratase of Sinorhizobium medicae (strain WSM419) (Ensifer medicae).